The chain runs to 305 residues: UDP-3-O-acyl-N-acetylglucosamine deacetylase (305 aa).

Residues histidine 79, histidine 238, and aspartate 242 each contribute to the Zn(2+) site. Catalysis depends on histidine 265, which acts as the Proton donor.

It belongs to the LpxC family. It depends on Zn(2+) as a cofactor.

The enzyme catalyses a UDP-3-O-[(3R)-3-hydroxyacyl]-N-acetyl-alpha-D-glucosamine + H2O = a UDP-3-O-[(3R)-3-hydroxyacyl]-alpha-D-glucosamine + acetate. The protein operates within glycolipid biosynthesis; lipid IV(A) biosynthesis; lipid IV(A) from (3R)-3-hydroxytetradecanoyl-[acyl-carrier-protein] and UDP-N-acetyl-alpha-D-glucosamine: step 2/6. Catalyzes the hydrolysis of UDP-3-O-myristoyl-N-acetylglucosamine to form UDP-3-O-myristoylglucosamine and acetate, the committed step in lipid A biosynthesis. The chain is UDP-3-O-acyl-N-acetylglucosamine deacetylase from Edwardsiella ictaluri (strain 93-146).